Consider the following 293-residue polypeptide: Phosphatidate cytidylyltransferase (293 aa).

A run of 8 helical transmembrane segments spans residues 6–26, 51–71, 73–93, 97–117, 157–177, 195–215, 218–238, and 273–293; these read IISAVIGIALAFSLLILGGWY, IAPAAKTTMVLSLMLLLSATV, PHLTDAFFPLTGALICFYLLF, MATIADISTSLLGLFYGGYLP, LLVTILAFACIWAADIGAYIM, VEGSLWGVGGSLLVGVLGAWY, WPYWEITGALLGLLIGIVSLL, and VFTAPLVYYFVVLLLPVLNNL.

The protein belongs to the CDS family.

The protein localises to the cell membrane. The catalysed reaction is a 1,2-diacyl-sn-glycero-3-phosphate + CTP + H(+) = a CDP-1,2-diacyl-sn-glycerol + diphosphate. It participates in phospholipid metabolism; CDP-diacylglycerol biosynthesis; CDP-diacylglycerol from sn-glycerol 3-phosphate: step 3/3. This is Phosphatidate cytidylyltransferase (cdsA) from Synechocystis sp. (strain ATCC 27184 / PCC 6803 / Kazusa).